A 354-amino-acid polypeptide reads, in one-letter code: S-adenosylmethionine:tRNA ribosyltransferase-isomerase (354 aa).

It belongs to the QueA family. In terms of assembly, monomer.

The protein localises to the cytoplasm. It catalyses the reaction 7-aminomethyl-7-carbaguanosine(34) in tRNA + S-adenosyl-L-methionine = epoxyqueuosine(34) in tRNA + adenine + L-methionine + 2 H(+). Its pathway is tRNA modification; tRNA-queuosine biosynthesis. Its function is as follows. Transfers and isomerizes the ribose moiety from AdoMet to the 7-aminomethyl group of 7-deazaguanine (preQ1-tRNA) to give epoxyqueuosine (oQ-tRNA). The polypeptide is S-adenosylmethionine:tRNA ribosyltransferase-isomerase (Pseudomonas syringae pv. tomato (strain ATCC BAA-871 / DC3000)).